The primary structure comprises 635 residues: Cell pattern formation-associated protein stuA (635 aa).

Disordered regions lie at residues 1–21 (MNQTQPYMDVHSSHLSSAQPY) and 63–82 (SGVASSQTAPPPPSTSMSSQ). In terms of domain architecture, HTH APSES-type spans 129 to 235 (RVTATLWEDE…HNIGGLLYHP (107 aa)). The H-T-H motif DNA-binding region spans 163–184 (GTKLLNVAGMTRGRRDGILKSE). 2 disordered regions span residues 246–480 (QESQ…ASRS) and 498–635 (SQLT…PRRR). Composition is skewed to low complexity over residues 276–294 (MQTSIPSQMPQPPTMSSQP) and 312–325 (SASSLMGLSNQSSS). The span at 326–355 (YDWNNQGMNSGVPNTQPLSIDTTLSNTRSM) shows a compositional bias: polar residues. The span at 356 to 380 (PTTPATTPPGNNLQGMQSYQSQSGY) shows a compositional bias: low complexity. Positions 460 to 469 (APEHESEYVQ) are enriched in basic and acidic residues. Polar residues-rich tracts occupy residues 498-513 (SQLTNDITGSPQQNGS) and 539-571 (AASSLYNIVSDTRGSSNGAGSENYTVASNTAPT). The segment at 582-605 (KRGREDDDMGRPDSQGDYESKRRR) is nuclear localization domain. Over residues 583 to 592 (RGREDDDMGR) the composition is skewed to basic and acidic residues.

It belongs to the EFG1/PHD1/stuA family.

Its function is as follows. Transcription factor that regulates asexual reproduction. Binds the StuA-response elements (StRE) with the consensus sequence 5'-(A/T)CGCG(T/A)N(A/C)-3' at the promoters of target genes. Controls the expression of 6 secondary metabolite biosynthetic clusters including 2 involved in the synthesis of alkaloids (fumigaclavine and fumitremorgen), 2 clusters of the ETP class (gliotoxin and an unknown ETP-like toxin), a cluster predicted to produce pseurotin A, and the product of the last cluster is unknown. Controls the production of ergot alkaloids during conidiophore development. Controls expression of sspA and gliP. Involved in the induction of immunoglobulin E-independent mast cell degranulation. In Aspergillus fumigatus (strain ATCC MYA-4609 / CBS 101355 / FGSC A1100 / Af293) (Neosartorya fumigata), this protein is Cell pattern formation-associated protein stuA.